Reading from the N-terminus, the 344-residue chain is N-acetyl-gamma-glutamyl-phosphate reductase (344 aa).

C148 is an active-site residue.

This sequence belongs to the NAGSA dehydrogenase family. Type 1 subfamily.

It localises to the cytoplasm. The enzyme catalyses N-acetyl-L-glutamate 5-semialdehyde + phosphate + NADP(+) = N-acetyl-L-glutamyl 5-phosphate + NADPH + H(+). The protein operates within amino-acid biosynthesis; L-arginine biosynthesis; N(2)-acetyl-L-ornithine from L-glutamate: step 3/4. Its function is as follows. Catalyzes the NADPH-dependent reduction of N-acetyl-5-glutamyl phosphate to yield N-acetyl-L-glutamate 5-semialdehyde. The chain is N-acetyl-gamma-glutamyl-phosphate reductase from Clostridium botulinum (strain Eklund 17B / Type B).